An 87-amino-acid polypeptide reads, in one-letter code: Small ribosomal subunit protein bS16 (87 aa).

The protein belongs to the bacterial ribosomal protein bS16 family.

The protein is Small ribosomal subunit protein bS16 of Ehrlichia ruminantium (strain Welgevonden).